A 123-amino-acid polypeptide reads, in one-letter code: Putative membrane protein insertion efficiency factor (123 aa).

The disordered stretch occupies residues 1 to 23 (MGSCGGKHTGKGAPKPYSRNFTD).

It belongs to the UPF0161 family.

The protein localises to the cell inner membrane. Functionally, could be involved in insertion of integral membrane proteins into the membrane. The sequence is that of Putative membrane protein insertion efficiency factor from Brucella abortus (strain 2308).